Reading from the N-terminus, the 564-residue chain is Septation ring formation regulator EzrA (564 aa).

Over 1–2 (MV) the chain is Extracellular. A helical transmembrane segment spans residues 3 to 21 (FVISVILAIIVILTIGLIL). At 22–564 (RKRIYDKVDH…IEENQLTLNR (543 aa)) the chain is on the cytoplasmic side. Coiled coils occupy residues 101-140 (ANNI…REEV), 168-215 (FDKK…MEQF), 251-436 (GFDK…KKSN), and 468-537 (DIAK…ELSL).

This sequence belongs to the EzrA family.

It is found in the cell membrane. Negative regulator of FtsZ ring formation; modulates the frequency and position of FtsZ ring formation. Inhibits FtsZ ring formation at polar sites. Interacts either with FtsZ or with one of its binding partners to promote depolymerization. In Oceanobacillus iheyensis (strain DSM 14371 / CIP 107618 / JCM 11309 / KCTC 3954 / HTE831), this protein is Septation ring formation regulator EzrA.